A 240-amino-acid chain; its full sequence is Keratinocyte-associated protein 3 (240 aa).

A run of 4 helical transmembrane segments spans residues 21–41 (VGLALILVGHVNLLLGAVLHG), 63–83 (VISVGSGLLSVSLGLVALLAS), 95–115 (LLALALVNLLLSAACSLGLLL), and 163–183 (ALALWIPSVFMSAAEAALSGY).

The protein belongs to the TMEM54 family.

The protein localises to the membrane. This Bos taurus (Bovine) protein is Keratinocyte-associated protein 3 (KRTCAP3).